We begin with the raw amino-acid sequence, 171 residues long: S-ribosylhomocysteine lyase (171 aa).

Positions 54, 58, and 128 each coordinate Fe cation.

It belongs to the LuxS family. Homodimer. The cofactor is Fe cation.

It carries out the reaction S-(5-deoxy-D-ribos-5-yl)-L-homocysteine = (S)-4,5-dihydroxypentane-2,3-dione + L-homocysteine. Its function is as follows. Involved in the synthesis of autoinducer 2 (AI-2) which is secreted by bacteria and is used to communicate both the cell density and the metabolic potential of the environment. The regulation of gene expression in response to changes in cell density is called quorum sensing. Catalyzes the transformation of S-ribosylhomocysteine (RHC) to homocysteine (HC) and 4,5-dihydroxy-2,3-pentadione (DPD). The polypeptide is S-ribosylhomocysteine lyase (Citrobacter koseri (strain ATCC BAA-895 / CDC 4225-83 / SGSC4696)).